Consider the following 523-residue polypeptide: Cytochrome P450 52-N1 (523 aa).

Residues 5–25 traverse the membrane as a helical segment; the sequence is AVLGAFAAFLLYMDVLYPFVI. Position 469 (C469) interacts with heme.

This sequence belongs to the cytochrome P450 family. It depends on heme as a cofactor.

The protein resides in the membrane. It catalyses the reaction an omega-methyl-long-chain fatty acid + reduced [NADPH--hemoprotein reductase] + O2 = an omega-hydroxy-long-chain fatty acid + oxidized [NADPH--hemoprotein reductase] + H2O + H(+). The catalysed reaction is (9Z,12Z)-octadecadienoate + reduced [NADPH--hemoprotein reductase] + O2 = 18-hydroxy-(9Z,12Z)-octadecadienoate + oxidized [NADPH--hemoprotein reductase] + H2O + H(+). The enzyme catalyses (9Z)-octadecenoate + reduced [NADPH--hemoprotein reductase] + O2 = 18-hydroxy-(9Z)-octadecenoate + oxidized [NADPH--hemoprotein reductase] + H2O + H(+). It carries out the reaction hexadecanoate + reduced [NADPH--hemoprotein reductase] + O2 = 16-hydroxyhexadecanoate + oxidized [NADPH--hemoprotein reductase] + H2O + H(+). It catalyses the reaction (9Z)-hexadecenoate + reduced [NADPH--hemoprotein reductase] + O2 = (9Z)-16-hydroxyhexadec-9-enoate + oxidized [NADPH--hemoprotein reductase] + H2O + H(+). The catalysed reaction is octadecanoate + reduced [NADPH--hemoprotein reductase] + O2 = 18-hydroxyoctadecanoate + oxidized [NADPH--hemoprotein reductase] + H2O + H(+). Catalyzes the terminal (at the omega-position) hydroxylation of a fatty acid. Probably involved in alkane metabolism. Linoleic acid is the preferred substrate, but it acts on various other C-16, C-18 and C-20 saturated and unsaturated fatty acids, namely palmitic, palmitoleic, stearic, oleic, alpha-linoleic, arachidonic and myristic acid. This is Cytochrome P450 52-N1 from Starmerella bombicola (Yeast).